The primary structure comprises 393 residues: Phosphoglycerate kinase (393 aa).

Residues 21–23 (DFN), 59–62 (HLGR), Arg118, and Arg151 contribute to the substrate site. ATP-binding positions include Lys201, Glu323, and 349–352 (GGDT).

The protein belongs to the phosphoglycerate kinase family. As to quaternary structure, monomer.

It localises to the cytoplasm. It carries out the reaction (2R)-3-phosphoglycerate + ATP = (2R)-3-phospho-glyceroyl phosphate + ADP. It participates in carbohydrate degradation; glycolysis; pyruvate from D-glyceraldehyde 3-phosphate: step 2/5. This is Phosphoglycerate kinase from Pelotomaculum thermopropionicum (strain DSM 13744 / JCM 10971 / SI).